The primary structure comprises 235 residues: Protein FEV (235 aa).

A DNA-binding region (ETS) is located at residues 58-138 (IQLWQFLLEL…HGKRYAYKFD (81 aa)).

This sequence belongs to the ETS family. Expressed by serotonergic neurons in anterior and posterior raphe.

It localises to the nucleus. In terms of biological role, functions as a transcriptional regulator. Functions in the differentiation and the maintenance of the central serotonergic neurons. May play a role in cell growth. This chain is Protein FEV (fev), found in Danio rerio (Zebrafish).